We begin with the raw amino-acid sequence, 431 residues long: Peptidase B (431 aa).

2 residues coordinate Mn(2+): K196 and D201. The active site involves K208. D219, D278, and E280 together coordinate Mn(2+). R282 is a catalytic residue.

The protein belongs to the peptidase M17 family. Homohexamer. The cofactor is Mn(2+).

The protein localises to the cytoplasm. It carries out the reaction Release of an N-terminal amino acid, Xaa, from a peptide or arylamide. Xaa is preferably Glu or Asp but may be other amino acids, including Leu, Met, His, Cys and Gln.. In terms of biological role, probably plays an important role in intracellular peptide degradation. The polypeptide is Peptidase B (Photorhabdus laumondii subsp. laumondii (strain DSM 15139 / CIP 105565 / TT01) (Photorhabdus luminescens subsp. laumondii)).